Consider the following 214-residue polypeptide: Pyrrolidone-carboxylate peptidase 2 (214 aa).

Catalysis depends on residues E78, C141, and H165.

Belongs to the peptidase C15 family. Homotetramer.

The protein localises to the cytoplasm. It carries out the reaction Release of an N-terminal pyroglutamyl group from a polypeptide, the second amino acid generally not being Pro.. Removes 5-oxoproline from various penultimate amino acid residues except L-proline. In Streptococcus pneumoniae serotype 4 (strain ATCC BAA-334 / TIGR4), this protein is Pyrrolidone-carboxylate peptidase 2.